Consider the following 916-residue polypeptide: Oxoglutarate dehydrogenase (916 aa).

This sequence belongs to the alpha-ketoglutarate dehydrogenase family. As to quaternary structure, homodimer. Part of the 2-oxoglutarate dehydrogenase (OGDH) complex composed of E1 (2-oxoglutarate dehydrogenase), E2 (dihydrolipoamide succinyltransferase) and E3 (dihydrolipoamide dehydrogenase); the complex contains multiple copies of the three enzymatic components (E1, E2 and E3). Requires thiamine diphosphate as cofactor.

The enzyme catalyses N(6)-[(R)-lipoyl]-L-lysyl-[protein] + 2-oxoglutarate + H(+) = N(6)-[(R)-S(8)-succinyldihydrolipoyl]-L-lysyl-[protein] + CO2. Its function is as follows. E1 component of the 2-oxoglutarate dehydrogenase (OGDH) complex which catalyzes the decarboxylation of 2-oxoglutarate, the first step in the conversion of 2-oxoglutarate to succinyl-CoA and CO(2). This is Oxoglutarate dehydrogenase (sucA) from Buchnera aphidicola subsp. Baizongia pistaciae (strain Bp).